The chain runs to 130 residues: DUF35 domain-containing scaffold protein (130 aa).

Positions 20, 23, 34, and 37 each coordinate Zn(2+).

This sequence belongs to the scaffold protein DUF35 family. As to quaternary structure, interacts with acetoacetyl-CoA thiolase and HMG-CoA synthase (HMGCS) that catalyzes the first and second step in the mevalonate pathway, respectively.

Functions as a scaffold to connect the acetoacetyl-CoA thiolase and HMG-CoA synthase (HMGCS) dimers in the channeling thiolase/HMGCS complex, which allows for efficient coupling of the endergonic thiolase reaction with the exergonic HMGCS reaction. This chain is DUF35 domain-containing scaffold protein, found in Methanothermococcus thermolithotrophicus (Methanococcus thermolithotrophicus).